The chain runs to 302 residues: UDP-N-acetylenolpyruvoylglucosamine reductase (302 aa).

In terms of domain architecture, FAD-binding PCMH-type spans 27 to 192 (KTGGPADYVA…VSVTFGLKPG (166 aa)). Arg171 is an active-site residue. Ser221 acts as the Proton donor in catalysis. Glu291 is a catalytic residue.

This sequence belongs to the MurB family. The cofactor is FAD.

It is found in the cytoplasm. The catalysed reaction is UDP-N-acetyl-alpha-D-muramate + NADP(+) = UDP-N-acetyl-3-O-(1-carboxyvinyl)-alpha-D-glucosamine + NADPH + H(+). The protein operates within cell wall biogenesis; peptidoglycan biosynthesis. Its function is as follows. Cell wall formation. The polypeptide is UDP-N-acetylenolpyruvoylglucosamine reductase (Lactiplantibacillus plantarum (strain ATCC BAA-793 / NCIMB 8826 / WCFS1) (Lactobacillus plantarum)).